The sequence spans 162 residues: Interleukin-15 (162 aa).

An N-terminal signal peptide occupies residues 1–29; it reads MRISKPHLRSISIQCYLCLLLKSHFLTEA. Positions 30-48 are excised as a propeptide; that stretch reads GIHVFILGCFSAGLPKTEA. 2 disulfides stabilise this stretch: C83–C133 and C90–C136. Residue N127 is glycosylated (N-linked (GlcNAc...) asparagine).

Belongs to the IL-15/IL-21 family.

It localises to the secreted. Its function is as follows. Cytokine that plays a major role in the development of inflammatory and protective immune responses to microbial invaders and parasites by modulating immune cells of both the innate and adaptive immune systems. Stimulates the proliferation of natural killer cells, T-cells and B-cells and promotes the secretion of several cytokines. In monocytes, induces the production of IL8 and monocyte chemotactic protein 1/CCL2, two chemokines that attract neutrophils and monocytes respectively to sites of infection. Unlike most cytokines, which are secreted in soluble form, IL15 is expressed in association with its high affinity IL15RA on the surface of IL15-producing cells and delivers signals to target cells that express IL2RB and IL2RG receptor subunits. Binding to its receptor triggers the phosphorylation of JAK1 and JAK3 and the recruitment and subsequent phosphorylation of signal transducer and activator of transcription-3/STAT3 and STAT5. In mast cells, induces the rapid tyrosine phosphorylation of STAT6 and thereby controls mast cell survival and release of cytokines such as IL4. The protein is Interleukin-15 (IL15) of Chlorocebus aethiops (Green monkey).